We begin with the raw amino-acid sequence, 176 residues long: MKFLFDLFPIILFFVAYKVWGIFTATAVAIGATLVQIAWVAFRHRKVDPMLWVSLGVVTVFGGATLVLHNDTFIKWKPTVLYWAFSVVLVVSALGFNKNLIEAMMGKQIQLPHRIWGQLNYVWAVFFVLLGILNLFVAYNFSTDAWVNFKLFGATGCLVVFIVGQSLWLSKYMKEE.

5 helical membrane passes run 24–44, 49–69, 76–96, 121–141, and 149–169; these read TATAVAIGATLVQIAWVAFRH, PMLWVSLGVVTVFGGATLVLH, WKPTVLYWAFSVVLVVSALGF, YVWAVFFVLLGILNLFVAYNF, and FKLFGATGCLVVFIVGQSLWL.

This sequence belongs to the YciB family.

The protein resides in the cell inner membrane. In terms of biological role, plays a role in cell envelope biogenesis, maintenance of cell envelope integrity and membrane homeostasis. In Paraburkholderia phymatum (strain DSM 17167 / CIP 108236 / LMG 21445 / STM815) (Burkholderia phymatum), this protein is Inner membrane-spanning protein YciB.